The primary structure comprises 1775 residues: ATP-dependent RNA helicase DEAH12, chloroplastic (1775 aa).

Residues 1 to 33 constitute a chloroplast transit peptide; that stretch reads MRNSFPPSDGGRSATDRRQQSSHSSSTNRYNSR. A disordered region spans residues 1–77; the sequence is MRNSFPPSDG…NPSSGYSPPV (77 aa). A compositionally biased stretch (low complexity) spans 21–34; the sequence is SSHSSSTNRYNSRS. The segment covering 35-60 has biased composition (polar residues); sequence AQSSPPLNHRPTWNQQHSQYPNSNFP. Positions 316 to 480 constitute a Helicase ATP-binding domain; it reads LKKIHREQIM…FFSCGILLVN (165 aa). 329–336 lines the ATP pocket; that stretch reads GETGSGKS. The DEAH box motif lies at 427–430; sequence DEAH. The Helicase C-terminal domain occupies 510-676; the sequence is DVVKMAVEIH…VALLRMLALG (167 aa). Residues 1560–1767 form a TRIAD supradomain region; sequence IEVECPICLS…EPCYAHLRTI (208 aa). 18 residues coordinate Zn(2+): cysteine 1564, cysteine 1567, cysteine 1580, histidine 1582, cysteine 1585, cysteine 1588, cysteine 1607, cysteine 1612, cysteine 1652, cysteine 1657, cysteine 1675, cysteine 1678, cysteine 1683, cysteine 1686, histidine 1691, cysteine 1696, cysteine 1722, and cysteine 1725. Residues 1564-1612 form an RING-type 1 zinc finger; the sequence is CPICLSEVDDGYSLEGCSHLFCKACLLEQFEASMRNFDAFPILCSHIDC. The segment at 1631 to 1696 adopts an IBR-type zinc-finger fold; that stretch reads DELFSASLSS…HLEYHPLITC (66 aa). The segment at 1722-1750 adopts an RING-type 2; atypical zinc-finger fold; sequence CPICKSTIEKTDGCNHMKCRCGKHICWTC. The active site involves cysteine 1735. Residues cysteine 1740 and cysteine 1742 each contribute to the Zn(2+) site.

It belongs to the DEAD box helicase family. DEAH subfamily.

The protein resides in the plastid. It localises to the chloroplast. The catalysed reaction is ATP + H2O = ADP + phosphate + H(+). The chain is ATP-dependent RNA helicase DEAH12, chloroplastic from Arabidopsis thaliana (Mouse-ear cress).